Here is a 121-residue protein sequence, read N- to C-terminus: Large ribosomal subunit protein bL12 (121 aa).

The protein belongs to the bacterial ribosomal protein bL12 family. Homodimer. Part of the ribosomal stalk of the 50S ribosomal subunit. Forms a multimeric L10(L12)X complex, where L10 forms an elongated spine to which 2 to 4 L12 dimers bind in a sequential fashion. Binds GTP-bound translation factors.

In terms of biological role, forms part of the ribosomal stalk which helps the ribosome interact with GTP-bound translation factors. Is thus essential for accurate translation. The polypeptide is Large ribosomal subunit protein bL12 (Erwinia tasmaniensis (strain DSM 17950 / CFBP 7177 / CIP 109463 / NCPPB 4357 / Et1/99)).